The chain runs to 432 residues: Glutamyl-tRNA reductase (432 aa).

Substrate is bound by residues 49 to 52, Ser107, 112 to 114, and Gln118; these read TCNR and ETQ. Cys50 (nucleophile) is an active-site residue. 186–191 lines the NADP(+) pocket; sequence GAGEMG.

The protein belongs to the glutamyl-tRNA reductase family. Homodimer.

The enzyme catalyses (S)-4-amino-5-oxopentanoate + tRNA(Glu) + NADP(+) = L-glutamyl-tRNA(Glu) + NADPH + H(+). It participates in porphyrin-containing compound metabolism; protoporphyrin-IX biosynthesis; 5-aminolevulinate from L-glutamyl-tRNA(Glu): step 1/2. Its function is as follows. Catalyzes the NADPH-dependent reduction of glutamyl-tRNA(Glu) to glutamate 1-semialdehyde (GSA). This Campylobacter jejuni subsp. jejuni serotype O:2 (strain ATCC 700819 / NCTC 11168) protein is Glutamyl-tRNA reductase.